We begin with the raw amino-acid sequence, 295 residues long: Bifunctional protein FolD (295 aa).

NADP(+) is bound by residues 166–168 (GRS), Thr195, and Val236.

Belongs to the tetrahydrofolate dehydrogenase/cyclohydrolase family. Homodimer.

It carries out the reaction (6R)-5,10-methylene-5,6,7,8-tetrahydrofolate + NADP(+) = (6R)-5,10-methenyltetrahydrofolate + NADPH. It catalyses the reaction (6R)-5,10-methenyltetrahydrofolate + H2O = (6R)-10-formyltetrahydrofolate + H(+). Its pathway is one-carbon metabolism; tetrahydrofolate interconversion. Catalyzes the oxidation of 5,10-methylenetetrahydrofolate to 5,10-methenyltetrahydrofolate and then the hydrolysis of 5,10-methenyltetrahydrofolate to 10-formyltetrahydrofolate. The chain is Bifunctional protein FolD from Syntrophobacter fumaroxidans (strain DSM 10017 / MPOB).